The sequence spans 64 residues: Large ribosomal subunit protein bL35 (64 aa).

The tract at residues 1–43 (MPKMKSKKSLAKRVIAKKNGTLKRGKAYRSHRATGKTTKQKRH) is disordered.

This sequence belongs to the bacterial ribosomal protein bL35 family.

This Mesoplasma florum (strain ATCC 33453 / NBRC 100688 / NCTC 11704 / L1) (Acholeplasma florum) protein is Large ribosomal subunit protein bL35.